A 395-amino-acid chain; its full sequence is Phosphoglycerate kinase (395 aa).

Residues 21–23 (DLN), Arg36, 59–62 (HLGR), Arg113, and Arg146 each bind substrate. ATP-binding positions include Lys197, Glu324, and 350 to 353 (GGDT).

The protein belongs to the phosphoglycerate kinase family. Monomer.

It is found in the cytoplasm. The catalysed reaction is (2R)-3-phosphoglycerate + ATP = (2R)-3-phospho-glyceroyl phosphate + ADP. Its pathway is carbohydrate degradation; glycolysis; pyruvate from D-glyceraldehyde 3-phosphate: step 2/5. The protein is Phosphoglycerate kinase of Acinetobacter baumannii (strain ACICU).